The sequence spans 55 residues: MAKPATILIKLLSTAGTGFFYVAKKNPRKTTEKLEFRKYDPVVRKHVQFKEAKIK.

Belongs to the bacterial ribosomal protein bL33 family.

The polypeptide is Large ribosomal subunit protein bL33 (Paramagnetospirillum magneticum (strain ATCC 700264 / AMB-1) (Magnetospirillum magneticum)).